A 569-amino-acid polypeptide reads, in one-letter code: Urease subunit beta (569 aa).

Positions 131–569 (GGIDTHIHFI…VSLAQLFSIF (439 aa)) constitute a Urease domain. Residues His-136, His-138, and Lys-219 each coordinate Ni(2+). The residue at position 219 (Lys-219) is an N6-carboxylysine. Substrate is bound at residue His-221. His-248 and His-274 together coordinate Ni(2+). The Proton donor role is filled by His-322. Asp-362 lines the Ni(2+) pocket.

Belongs to the metallo-dependent hydrolases superfamily. Urease alpha subunit family. Heterohexamer of 3 UreA (alpha) and 3 UreB (beta) subunits. Ni cation serves as cofactor. In terms of processing, carboxylation allows a single lysine to coordinate two nickel ions.

It localises to the cytoplasm. It carries out the reaction urea + 2 H2O + H(+) = hydrogencarbonate + 2 NH4(+). It functions in the pathway nitrogen metabolism; urea degradation; CO(2) and NH(3) from urea (urease route): step 1/1. This Helicobacter pylori (strain P12) protein is Urease subunit beta.